Consider the following 101-residue polypeptide: Small ribosomal subunit protein bS18c (101 aa).

Over residues 1-19 (MDKSKQPFHKTKRSFRRRL) the composition is skewed to basic residues. Positions 1–23 (MDKSKQPFHKTKRSFRRRLPPIG) are disordered.

It belongs to the bacterial ribosomal protein bS18 family. Part of the 30S ribosomal subunit.

The protein resides in the plastid. It is found in the chloroplast. The chain is Small ribosomal subunit protein bS18c from Lemna minor (Common duckweed).